Here is a 714-residue protein sequence, read N- to C-terminus: P-loop NTPase domain-containing protein LPA1 (714 aa).

Positions 1–11 (MPMPPQCASSK) are enriched in low complexity. Disordered stretches follow at residues 1–42 (MPMP…PPPK), 259–293 (QKLD…PRTE), and 595–689 (FGSE…GSGN). Residues 271-285 (EGRDDTSDDKAHHGS) are compositionally biased toward basic and acidic residues. Acidic residues predominate over residues 595–617 (FGSEEDADDPPDAGTDEDLTDEE). The span at 618-636 (RDMHEIEAGSVDEHSTKSD) shows a compositional bias: basic and acidic residues. The segment covering 659 to 670 (AASSTKNSSNQE) has biased composition (polar residues).

Expressed in roots, leaf blade shoots, leaf sheath shoots and panicles.

Required for the accumulation of phytic acid in seeds. Phytic acid is the primary storage form of phosphorus in cereal grains and other plant seeds. This is P-loop NTPase domain-containing protein LPA1 from Oryza sativa subsp. japonica (Rice).